Reading from the N-terminus, the 256-residue chain is Probable sulfite/organosulfonate exporter TauE (256 aa).

A run of 8 helical transmembrane segments spans residues 5 to 25, 33 to 53, 76 to 96, 103 to 123, 142 to 162, 172 to 190, 199 to 219, and 236 to 256; these read LLLP…FQTV, IVMG…AAVV, AVAA…LVLE, ATLL…SAAL, VFGG…IFQF, IRCA…RTLF, AAVC…TLLG, and FGVL…AWVL.

Belongs to the 4-toluene sulfonate uptake permease (TSUP) (TC 2.A.102) family.

It is found in the cell inner membrane. Could be a sulfite/organosulfonate exporter with a wide substrate range, including 3-sulfolactate and 3-sulfopyruvate. This chain is Probable sulfite/organosulfonate exporter TauE, found in Cupriavidus necator (strain ATCC 17699 / DSM 428 / KCTC 22496 / NCIMB 10442 / H16 / Stanier 337) (Ralstonia eutropha).